The following is a 213-amino-acid chain: Ras-related protein Rab-4A (213 aa).

GTP is bound by residues Gly-18, Thr-19, Gly-20, Lys-21, Ser-22, Cys-23, Ser-37, His-39, and Thr-40. Position 22 (Ser-22) interacts with Mg(2+). The Switch 1 signature appears at His-39–Glu-44. Mg(2+) is bound by residues Thr-40 and Asp-63. Positions Ala-65–Thr-74 match the Switch 2 motif. 6 residues coordinate GTP: Gly-66, Asn-121, Lys-122, Asp-124, Ala-152, and Leu-153. Residues Cys-211 and Cys-213 are each lipidated (S-geranylgeranyl cysteine). Cys-213 bears the Cysteine methyl ester mark.

The protein belongs to the small GTPase superfamily. Rab family. Requires Mg(2+) as cofactor.

It is found in the membrane. The protein resides in the cytoplasm. Its subcellular location is the early endosome membrane. The protein localises to the recycling endosome membrane. The enzyme catalyses GTP + H2O = GDP + phosphate + H(+). With respect to regulation, regulated by guanine nucleotide exchange factors (GEFs) which promote the exchange of bound GDP for free GTP. Regulated by GTPase activating proteins (GAPs) which increase the GTP hydrolysis activity. Inhibited by GDP dissociation inhibitors (GDIs). Functionally, the small GTPases Rab are key regulators of intracellular membrane trafficking, from the formation of transport vesicles to their fusion with membranes. Rabs cycle between an inactive GDP-bound form and an active GTP-bound form that is able to recruit to membranes different sets of downstream effectors directly responsible for vesicle formation, movement, tethering and fusion. RAB4A is involved in protein transport. Also plays a role in vesicular traffic. Mediates VEGFR2 endosomal trafficking to enhance VEGFR2 signaling. Acts as a regulator of platelet alpha-granule release during activation and aggregation of platelets. The sequence is that of Ras-related protein Rab-4A (rab4a) from Danio rerio (Zebrafish).